Here is a 298-residue protein sequence, read N- to C-terminus: Elongation factor Ts (298 aa).

Residues 80–83 (TDFV) form an involved in Mg(2+) ion dislocation from EF-Tu region.

Belongs to the EF-Ts family.

Its subcellular location is the cytoplasm. Associates with the EF-Tu.GDP complex and induces the exchange of GDP to GTP. It remains bound to the aminoacyl-tRNA.EF-Tu.GTP complex up to the GTP hydrolysis stage on the ribosome. This Acidovorax sp. (strain JS42) protein is Elongation factor Ts.